A 431-amino-acid chain; its full sequence is Adenylosuccinate synthetase (431 aa).

GTP is bound by residues 12 to 18 (GDEGKGK) and 40 to 42 (GHT). D13 (proton acceptor) is an active-site residue. The Mg(2+) site is built by D13 and G40. IMP is bound by residues 13–16 (DEGK), 38–41 (NAGH), T130, R144, Q225, T240, and R304. Residue H41 is the Proton donor of the active site. 300–306 (ATTGRPR) serves as a coordination point for substrate. GTP-binding positions include R306, 332–334 (KLD), and 414–416 (SVG).

This sequence belongs to the adenylosuccinate synthetase family. In terms of assembly, homodimer. The cofactor is Mg(2+).

The protein localises to the cytoplasm. The enzyme catalyses IMP + L-aspartate + GTP = N(6)-(1,2-dicarboxyethyl)-AMP + GDP + phosphate + 2 H(+). Its pathway is purine metabolism; AMP biosynthesis via de novo pathway; AMP from IMP: step 1/2. Its function is as follows. Plays an important role in the de novo pathway of purine nucleotide biosynthesis. Catalyzes the first committed step in the biosynthesis of AMP from IMP. The chain is Adenylosuccinate synthetase from Geotalea daltonii (strain DSM 22248 / JCM 15807 / FRC-32) (Geobacter daltonii).